The chain runs to 240 residues: NAD(P)H-hydrate epimerase (240 aa).

A YjeF N-terminal domain is found at 15–224 (AQEIDAELMG…SYNLKLPCYP (210 aa)). 66–70 (NQGGD) serves as a coordination point for (6S)-NADPHX. K(+) is bound by residues Gln67 and Asp129. Residues 133–139 (GFSFHSE) and Asp162 each bind (6S)-NADPHX. Ser165 lines the K(+) pocket.

Belongs to the NnrE/AIBP family. Requires K(+) as cofactor.

It is found in the cytoplasm. It localises to the mitochondrion. It carries out the reaction (6R)-NADHX = (6S)-NADHX. The catalysed reaction is (6R)-NADPHX = (6S)-NADPHX. Catalyzes the epimerization of the S- and R-forms of NAD(P)HX, a damaged form of NAD(P)H that is a result of enzymatic or heat-dependent hydration. This is a prerequisite for the S-specific NAD(P)H-hydrate dehydratase to allow the repair of both epimers of NAD(P)HX. The sequence is that of NAD(P)H-hydrate epimerase from Puccinia graminis f. sp. tritici (strain CRL 75-36-700-3 / race SCCL) (Black stem rust fungus).